A 523-amino-acid polypeptide reads, in one-letter code: Anthranilate synthase component 1 (523 aa).

L-tryptophan is bound by residues Ser45 and 296 to 298; that span reads PYM. Chorismate is bound at residue 333 to 334; sequence GT. Glu366 contacts Mg(2+). Chorismate is bound by residues Tyr454, Arg474, 488–490, and Gly490; that span reads GAG. Residue Glu503 coordinates Mg(2+).

The protein belongs to the anthranilate synthase component I family. Heterotetramer consisting of two non-identical subunits: a beta subunit (TrpG) and a large alpha subunit (TrpE). The cofactor is Mg(2+).

The enzyme catalyses chorismate + L-glutamine = anthranilate + pyruvate + L-glutamate + H(+). The protein operates within amino-acid biosynthesis; L-tryptophan biosynthesis; L-tryptophan from chorismate: step 1/5. Feedback inhibited by tryptophan. Its function is as follows. Part of a heterotetrameric complex that catalyzes the two-step biosynthesis of anthranilate, an intermediate in the biosynthesis of L-tryptophan. In the first step, the glutamine-binding beta subunit (TrpG) of anthranilate synthase (AS) provides the glutamine amidotransferase activity which generates ammonia as a substrate that, along with chorismate, is used in the second step, catalyzed by the large alpha subunit of AS (TrpE) to produce anthranilate. In the absence of TrpG, TrpE can synthesize anthranilate directly from chorismate and high concentrations of ammonia. The chain is Anthranilate synthase component 1 (trpE) from Vibrio cholerae serotype O1 (strain ATCC 39315 / El Tor Inaba N16961).